The primary structure comprises 125 residues: MAVYAKDLDNNKELNQKLINDQLKIIDTLLLAEKKNFLVYELPAPFDFSSGDPLASQRDIYYAIIKSLEERGFTVKICMKGDRALLFITWKKIQSIEINKKEEYLRMHFIQDEEKAFYCKFLESR.

The protein belongs to the asfivirus B125R family.

This is an uncharacterized protein from Ornithodoros (relapsing fever ticks).